A 349-amino-acid chain; its full sequence is MFSKRIKLLKAYKTETTPCHIKLSSNENPFDLEESVKLELLEVIKNIEFNRYPDPHATKLRQTLSKLYEVEPENIMVCNGSDEAIQYLMLGIGELDEGVLIPRPTFPMYEVIANALGKPIYDVDLDENFQMNKQTLQKALEKKPSIAFISNPNNPTGNLFRDEDIALIRKHTFTVVDEAYYDFCGKTYIKDAIKDDNMAVMRTLSKIGLASLRVGALIGTKEFIREISKLKMPFNVSYTSQAMADYIISNHIDNIKNQIKVLIDERHRLKEALSDIKGIKVYDSCANFFLIKVNDADFIHKSLIQKGILTRNISYLPNLENHIRISIGKKEENDALINALKEIAQQVYL.

At K206 the chain carries N6-(pyridoxal phosphate)lysine.

This sequence belongs to the class-II pyridoxal-phosphate-dependent aminotransferase family. Histidinol-phosphate aminotransferase subfamily. Homodimer. The cofactor is pyridoxal 5'-phosphate.

It catalyses the reaction L-histidinol phosphate + 2-oxoglutarate = 3-(imidazol-4-yl)-2-oxopropyl phosphate + L-glutamate. It participates in amino-acid biosynthesis; L-histidine biosynthesis; L-histidine from 5-phospho-alpha-D-ribose 1-diphosphate: step 7/9. The protein is Histidinol-phosphate aminotransferase of Hydrogenobaculum sp. (strain Y04AAS1).